The sequence spans 444 residues: F-box protein At1g53790 (444 aa).

An F-box domain is found at 76 to 125 (VSCFRYIPIDLLMDIFSRVPAKSIARFRCVSKLWESILCRPDFKELFMTM).

The sequence is that of F-box protein At1g53790 from Arabidopsis thaliana (Mouse-ear cress).